Here is a 566-residue protein sequence, read N- to C-terminus: 4-coumarate--CoA ligase-like 6 (566 aa).

The interval 1-21 (MAATHLHIPPNPKTQTSHQNP) is disordered. Residues Ser212, Ser213, Gly214, Thr215, Thr216, and Lys220 each contribute to the ATP site. Tyr263 contributes to the (E)-4-coumaroyl-AMP binding site. Position 284 (Arg284) interacts with CoA. The SBD1 stretch occupies residues 286–356 (DASDVVNVIE…QTLPHVDLIQ (71 aa)). Residues Ala334, Gln356, Gly357, and Thr361 each coordinate (E)-4-coumaroyl-AMP. 5 residues coordinate ATP: Gln356, Gly357, Thr361, Asp442, and Arg457. The SBD2 stretch occupies residues 357–421 (GYGMTESTAV…IQGPGVMKGY (65 aa)). Residues Lys459 and Lys463 each coordinate (E)-4-coumaroyl-AMP. Positions 465 and 466 each coordinate CoA. Position 548 (Lys548) interacts with ATP. A Microbody targeting signal motif is present at residues 564–566 (SRL).

Belongs to the ATP-dependent AMP-binding enzyme family. The cofactor is Mg(2+). Expressed at very low level in leaves.

It localises to the peroxisome. The catalysed reaction is (E)-4-coumarate + ATP + CoA = (E)-4-coumaroyl-CoA + AMP + diphosphate. It catalyses the reaction (E)-4-coumarate + ATP + H(+) = (E)-4-coumaroyl-AMP + diphosphate. It carries out the reaction (E)-4-coumaroyl-AMP + CoA = (E)-4-coumaroyl-CoA + AMP + H(+). The enzyme catalyses (E)-ferulate + ATP + CoA = (E)-feruloyl-CoA + AMP + diphosphate. The catalysed reaction is (E)-ferulate + ATP + H(+) = (E)-feruloyl-AMP + diphosphate. It catalyses the reaction (E)-feruloyl-AMP + CoA = (E)-feruloyl-CoA + AMP + H(+). It carries out the reaction (E)-caffeate + ATP + CoA = (E)-caffeoyl-CoA + AMP + diphosphate. The enzyme catalyses (E)-caffeate + ATP + H(+) = (E)-caffeoyl-AMP + diphosphate. The catalysed reaction is (E)-caffeoyl-AMP + CoA = (E)-caffeoyl-CoA + AMP + H(+). It catalyses the reaction (E)-cinnamate + ATP + CoA = (E)-cinnamoyl-CoA + AMP + diphosphate. It carries out the reaction 4-hydroxybenzoate + ATP + CoA = 4-hydroxybenzoyl-CoA + AMP + diphosphate. The enzyme catalyses tetradecanoate + ATP + CoA = tetradecanoyl-CoA + AMP + diphosphate. The catalysed reaction is hexanoate + ATP + CoA = hexanoyl-CoA + AMP + diphosphate. It catalyses the reaction heptanoate + ATP + CoA = heptanoyl-CoA + AMP + diphosphate. In terms of biological role, contributes to jasmonic acid biosynthesis by initiating the beta-oxidative chain shortening of its precursors. Acts as a carboxylate--CoA ligase that can use preferentially p-coumarate, ferulate and caffeate as substrates and, with a lower efficiency, (E)-cinnamate and 4-hydroxybenzoate as substrates. Involved in the biosynthesis of ubiquinone from phenylalanine by activating the propyl side chain of 4-coumarate, and possibly trans-cinnamate and 4-hydroxybenzoate, for subsequent beta-oxidative shortening and the formation of the benzenoid moiety of ubiquinone. Follows a two-step reaction mechanism, wherein the carboxylate substrate first undergoes adenylation by ATP, followed by a thioesterification in the presence of CoA to yield the final CoA thioester. This is 4-coumarate--CoA ligase-like 6 from Arabidopsis thaliana (Mouse-ear cress).